A 74-amino-acid chain; its full sequence is Small cysteine-rich protein 8 (74 aa).

The signal sequence occupies residues 1 to 21 (MAAKFHLCLLLIILGTITVQG). Residues 22 to 31 (ARHPGKPHFF) constitute a propeptide that is removed on maturation.

It belongs to the Cnidaria small cysteine-rich protein (SCRiP) family. beta subfamily. Post-translationally, contains 4 disulfide bonds.

The protein resides in the secreted. It localises to the nematocyst. Induces neurotoxic symptoms on zebrafish. Has also been claimed to be implied in calcification, but tests on homolog proteins suggest that proteins of this family have a neurotoxic function and not a calcification function. In Orbicella faveolata (Mountainous star coral), this protein is Small cysteine-rich protein 8.